Reading from the N-terminus, the 248-residue chain is NAD kinase (248 aa).

Aspartate 45 acts as the Proton acceptor in catalysis. Residues 45-46 (DG), arginine 50, 110-111 (NE), and aspartate 138 contribute to the NAD(+) site.

It belongs to the NAD kinase family. It depends on a divalent metal cation as a cofactor.

The protein resides in the cytoplasm. The catalysed reaction is NAD(+) + ATP = ADP + NADP(+) + H(+). Its function is as follows. Involved in the regulation of the intracellular balance of NAD and NADP, and is a key enzyme in the biosynthesis of NADP. Catalyzes specifically the phosphorylation on 2'-hydroxyl of the adenosine moiety of NAD to yield NADP. In Sulfurisphaera tokodaii (strain DSM 16993 / JCM 10545 / NBRC 100140 / 7) (Sulfolobus tokodaii), this protein is NAD kinase.